The primary structure comprises 1349 residues: Zinc finger protein 804B (1349 aa).

The segment at 55–79 (FYCELCDKQYHKHQEFDNHINSYDH) adopts a C2H2-type zinc-finger fold. The segment at 985 to 1010 (YASESRNDQDSAIPRTTEKDKSKSSH) is disordered.

The sequence is that of Zinc finger protein 804B (ZNF804B) from Homo sapiens (Human).